The sequence spans 445 residues: Argininosuccinate synthase (445 aa).

ATP contacts are provided by residues 17 to 25 (AFSGGLDTS) and Ala43. Tyr99 provides a ligand contact to L-citrulline. ATP-binding residues include Gly129 and Thr131. L-aspartate contacts are provided by Thr131, Asn135, and Asp136. Asn135 contacts L-citrulline. Asp136 is a binding site for ATP. The L-citrulline site is built by Arg139 and Ser192. Asp194 serves as a coordination point for ATP. Residues Thr201, Glu203, and Glu280 each coordinate L-citrulline.

It belongs to the argininosuccinate synthase family. Type 2 subfamily. In terms of assembly, homotetramer.

The protein localises to the cytoplasm. It catalyses the reaction L-citrulline + L-aspartate + ATP = 2-(N(omega)-L-arginino)succinate + AMP + diphosphate + H(+). Its pathway is amino-acid biosynthesis; L-arginine biosynthesis; L-arginine from L-ornithine and carbamoyl phosphate: step 2/3. In Rhodopseudomonas palustris (strain BisB5), this protein is Argininosuccinate synthase.